We begin with the raw amino-acid sequence, 143 residues long: Nucleoside diphosphate kinase (143 aa).

Positions 11, 59, 87, 93, 104, and 114 each coordinate ATP. H117 (pros-phosphohistidine intermediate) is an active-site residue.

This sequence belongs to the NDK family. In terms of assembly, homotetramer. Mg(2+) is required as a cofactor.

Its subcellular location is the cytoplasm. It carries out the reaction a 2'-deoxyribonucleoside 5'-diphosphate + ATP = a 2'-deoxyribonucleoside 5'-triphosphate + ADP. The catalysed reaction is a ribonucleoside 5'-diphosphate + ATP = a ribonucleoside 5'-triphosphate + ADP. Functionally, major role in the synthesis of nucleoside triphosphates other than ATP. The ATP gamma phosphate is transferred to the NDP beta phosphate via a ping-pong mechanism, using a phosphorylated active-site intermediate. The protein is Nucleoside diphosphate kinase of Clostridium perfringens (strain SM101 / Type A).